Consider the following 2590-residue polypeptide: 5-methylorsellinic acid synthase (2590 aa).

The interval 6–255 (LLCGSQAIQW…HNQVNRELFA (250 aa)) is N-terminal acylcarrier protein transacylase domain (SAT). The 416-residue stretch at 369-784 (GDSIAIVGMG…GSNAALIVTQ (416 aa)) folds into the Ketosynthase family 3 (KS3) domain. Active-site for beta-ketoacyl synthase activity residues include Cys-534, His-669, and His-707. Positions 891 to 1191 (LAFGGQTGNV…HAVNLGGPEP (301 aa)) are malonyl-CoA:ACP transacylase (MAT) domain. Ser-978 functions as the For acyl/malonyl transferase activity in the catalytic mechanism. Positions 1263–1393 (PKLVSFVKYL…GTVNISSLTS (131 aa)) are N-terminal hotdog fold. In terms of domain architecture, PKS/mFAS DH spans 1263 to 1569 (PKLVSFVKYL…FAKVPTASLK (307 aa)). The interval 1267–1568 (SFVKYLDSNR…RFAKVPTASL (302 aa)) is product template (PT) domain. The Proton acceptor; for dehydratase activity role is filled by His-1297. A C-terminal hotdog fold region spans residues 1421 to 1569 (TSAIQGSLVY…FAKVPTASLK (149 aa)). Asp-1481 (proton donor; for dehydratase activity) is an active-site residue. The disordered stretch occupies residues 1587–1612 (LKVTEPSANVPKAQPVSTYPKPMKPA). Carrier domains lie at 1617-1691 (AQIR…ASGT) and 1736-1812 (SAQA…IPKP). Ser-1651 and Ser-1772 each carry O-(pantetheine 4'-phosphoryl)serine. The tract at residues 1980–2212 (QHRGEHKLLN…GFRHVDWSDD (233 aa)) is methyltransferase (CMeT) domain. The interval 2282-2590 (LMIHGGGHIM…EGYEFLLRHL (309 aa)) is thioesterase (TE) domain.

The catalysed reaction is 3 malonyl-CoA + acetyl-CoA + S-adenosyl-L-methionine + H(+) = 5-methylorsellinate + S-adenosyl-L-homocysteine + 3 CO2 + 4 CoA. It participates in secondary metabolite biosynthesis. In terms of biological role, non-reducing polyketide synthase; part of the cluster A that mediates the biosynthesis of azasperpyranones, members of the azaphilone family that exhibit anti-cancer activities. Azasperpyranones are synthesized by 2 clusters, A and B. Cluster A is responsible for the production of the polyhydric phenol moiety while the azaphilonoid scaffold is produced by the cluster B. The non-reducing polyketide synthase ATEG_03629 produces 5-methyl orsellinic acid, which is then reduced to 5-methyl orsellinic aldehyde by the NRPS-like protein ATEG_03630. 5-methyl orsellinic aldehyde is then first hydroxylated by the FAD-dependent monooxygenase ATEG_03635 and subsequently hydroxylated by the cytochrome P450 monooxygenase ATEG_03631 to produce the unstable polyhydric phenol precursor of azasperpyranones. On the other hand, the polyketide synthase ATEG_07659 is responsible for producing the 3,5-dimethyloctadienone moiety from acetyl-CoA, three malonyl-CoA, and two S-adenosyl methionines (SAM). The 3,5-dimethyloctadienone moiety is then loaded onto the SAT domain of ATEG_07661 and extended with four malonyl-CoA and one SAM, which leads to the formation of 2,4-dihydroxy-6-(5,7-dimethyl-2-oxo-trans-3-trans-5-nonadienyl)-3-methylbenzaldehyde (compound 8) after reductive release and aldol condensation. The FAD-dependent monooxygenase ATEG_07662 is the next enzyme in the biosynthesis sequence and hydroxylates the side chain at the benzylic position of compound 8. In Aspergillus nidulans, afoF, the ortholog of the FAD-dependent oxygenase ATEG_07660, is the key enzyme for the biosynthesis of asperfuranone by catalyzing the hydroxylation at C-8 of to prevent the formation of a six-membered ring hemiacetal intermediate and thus facilitating the formation of a five-membered ring to produce asperfuranone. In Aspergillus terreus, ATEG_07660 is probably not functional, which leads to the formation of the six-membered ring hemiacetal intermediate presperpyranone instead of asperfuranone. Finally, ATEG_03636 is involved in the condensation of the polyhydric phenol moiety produced by cluster A and the perasperpyranone precursor produced by cluster B, to yield azasperpyranone A. Further modifications of azasperpyranone A result in the production of derivatives, including azasperpyranone B to F. The sequence is that of 5-methylorsellinic acid synthase from Aspergillus terreus (strain NIH 2624 / FGSC A1156).